The chain runs to 330 residues: CRISPR-associated endonuclease Cas1 (330 aa).

Residues Glu-154, His-222, and Glu-237 each contribute to the Mn(2+) site.

This sequence belongs to the CRISPR-associated endonuclease Cas1 family. In terms of assembly, homodimer, forms a heterotetramer with a Cas2 homodimer. Mg(2+) serves as cofactor. Requires Mn(2+) as cofactor.

CRISPR (clustered regularly interspaced short palindromic repeat), is an adaptive immune system that provides protection against mobile genetic elements (viruses, transposable elements and conjugative plasmids). CRISPR clusters contain spacers, sequences complementary to antecedent mobile elements, and target invading nucleic acids. CRISPR clusters are transcribed and processed into CRISPR RNA (crRNA). Acts as a dsDNA endonuclease. Involved in the integration of spacer DNA into the CRISPR cassette. In Clostridium perfringens (strain SM101 / Type A), this protein is CRISPR-associated endonuclease Cas1.